The chain runs to 187 residues: uncharacterized protein (187 aa).

Residues 127-172 (KQPQVTLTQLQEELDEAKTRLALKEKELLEALSEISKLRLQLSNQL) adopt a coiled-coil conformation.

This is an uncharacterized protein from Tomato torrado virus (isolate Solanum lycopersicum/Spain/PRIToTV0301/-) (ToTV).